The chain runs to 481 residues: Amino acid permease 6 (481 aa).

Residues 1–36 (MEKKKSMFVEQSFPEHEIGDTNKNFDEDGRDKRTGT) are Cytoplasmic-facing. 2 consecutive transmembrane segments (helical) span residues 37 to 57 (WMTG…LSLA) and 58 to 78 (WAIA…FSFI). Over 79–125 (TYFTSTMLADCYRSPDPVTGKRNYTYMEVVRSYLGGRKVQLCGLAQY) the chain is Cytoplasmic. The helical transmembrane segment at 126 to 146 (GNLIGITIGYTITASISMVAV) threads the bilayer. Residues 147–167 (KRSNCFHKNGHNVKCATSNTP) are Extracellular-facing. Residues 168-188 (FMIIFAIIQIILSQIPNFHNL) form a helical membrane-spanning segment. The Cytoplasmic segment spans residues 189–190 (SW). A helical membrane pass occupies residues 191 to 211 (LSILAAVMSFCYASIGVGLSI). The Extracellular portion of the chain corresponds to 212-242 (AKAAGGGEHVRTTLTGVTVGIDVSGAEKIWR). The helical transmembrane segment at 243–263 (TFQAIGDIAFAYAYSTVLIEI) threads the bilayer. Residues 264–283 (QDTLKAGPPSENKAMKRASL) are Cytoplasmic-facing. A helical transmembrane segment spans residues 284 to 304 (VGVSTTTFFYMLCGCVGYAAF). Residues 305–321 (GNDAPGNFLTGFGFYEP) are Extracellular-facing. Residues 322–342 (FWLIDFANVCIAVHLIGAYQV) form a helical membrane-spanning segment. Residues 343–385 (FCQPIFQFVESQSAKRWPDNKFITGEYKIHVPCCGDFSINFLR) lie on the Cytoplasmic side of the membrane. The helical transmembrane segment at 386–405 (LVWRTSYVVVTAVVAMIFPF) threads the bilayer. The Extracellular portion of the chain corresponds to 406 to 408 (FND). The chain crosses the membrane as a helical span at residues 409–427 (FLGLIGAASFWPLTVYFPI). The Cytoplasmic portion of the chain corresponds to 428 to 447 (EMHIAQKKIPKFSFTWTWLK). A helical transmembrane segment spans residues 448-468 (ILSWTCFIVSLVAAAGSVQGL). At 469-481 (IQSLKDFKPFQAP) the chain is on the extracellular side.

It belongs to the amino acid/polyamine transporter 2 family. Amino acid/auxin permease (AAAP) (TC 2.A.18.2) subfamily. In terms of tissue distribution, expressed in roots and leaves, and at lower levels in stems and flowers. Found in the xylem parenchyma.

The protein resides in the cell membrane. Functionally, amino acid-proton symporter. Stereospecific transporter with a broad specificity for tryptophan, proline, and neutral and acidic amino acids. Has an affinity for aspartate in a physiological range. Involved in the uptake of amino acids diffusing out of the xylem tracheids into the xylem parenchyma. In Arabidopsis thaliana (Mouse-ear cress), this protein is Amino acid permease 6 (AAP6).